The primary structure comprises 341 residues: MRYLITGTAGFIGFHVAKRLIDEGHFVVGFDGMTPYYDVTLKERRHAILQRSNGFKAVTAMLEDRAALDRAAELAEPEVIIHLAAQAGVRYSLENPKAYVDANLVGSWNMLELAKAIAPKHLMLASTSSIYGANEKIPFAEADRADEPMTLYAATKKSMELMAHSYAHLYKVPTTSFRFFTVYGPWGRPDMALFKFVDAIHNGRPIDIYGEGRMSRDFTYIDDLVESIVRLSHVPPSEENRVAPEKATDTLSRHAPFRVVNTGGGQPVELMTFVETVEKAVGRPAIHNMLPMQQGDVPRTFASPDLLEALTGFKPSVSVEEGVARFVEWYDQNYRRAHTTV.

Tyrosine 152 (proton acceptor) is an active-site residue.

The protein belongs to the NAD(P)-dependent epimerase/dehydratase family. NAD(+) is required as a cofactor.

The catalysed reaction is UDP-alpha-D-glucuronate = UDP-alpha-D-galacturonate. This Rhizobium meliloti (strain 1021) (Ensifer meliloti) protein is Probable UDP-glucuronate 4-epimerase.